A 393-amino-acid chain; its full sequence is Probable acetyl-CoA acyltransferase (393 aa).

The active-site Acyl-thioester intermediate is the C88. Active-site proton acceptor residues include H349 and C378.

This sequence belongs to the thiolase-like superfamily. Thiolase family.

It localises to the cytoplasm. It catalyses the reaction 2 acetyl-CoA = acetoacetyl-CoA + CoA. The protein is Probable acetyl-CoA acyltransferase of Staphylococcus aureus (strain COL).